Here is an 80-residue protein sequence, read N- to C-terminus: uncharacterized protein (80 aa).

Positions 1 to 15 are cleaved as a signal peptide; that stretch reads MVKLSFTLRFGDVWV.

This is an uncharacterized protein from Archaeoglobus fulgidus (strain ATCC 49558 / DSM 4304 / JCM 9628 / NBRC 100126 / VC-16).